Reading from the N-terminus, the 948-residue chain is Zinc finger CCCH domain-containing protein 18 (948 aa).

M1 carries the post-translational modification N-acetylmethionine. The interval 1 to 219 (MDVAESPELD…SDRKVRPRPT (219 aa)) is disordered. At S6 the chain carries Phosphoserine. The segment covering 15–25 (EDEEQPALSDD) has biased composition (acidic residues). A phosphoserine mark is found at S33, S45, S58, S64, S71, S75, S80, and S92. The span at 70 to 86 (ASEPKSQDQDSEAHELS) shows a compositional bias: basic and acidic residues. Residues 95–105 (EEGDDVEEDGT) show a composition bias toward acidic residues. T105 carries the phosphothreonine modification. 2 positions are modified to phosphoserine: S106 and S114. Basic and acidic residues predominate over residues 106-120 (SDLRDEASSVTRELD). 2 stretches are compositionally biased toward acidic residues: residues 121 to 132 (EHELDYDEEVPE) and 139 to 154 (QEEE…EEEK). S169 carries the phosphoserine modification. Residues 177–186 (EAAKEKKKED) are compositionally biased toward basic and acidic residues. The span at 187 to 203 (DDGEIDDGEIDDDDLEE) shows a compositional bias: acidic residues. Residues 204–213 (GEVKDPSDRK) show a composition bias toward basic and acidic residues. The C3H1-type zinc-finger motif lies at 215–241 (RPRPTCRFFMKGNCTWGMSCRFIHPGV). G245 bears the Omega-N-methylarginine mark. Disordered regions lie at residues 272 to 296 (ANPW…TESA) and 388 to 922 (YTEA…TLSR). Over residues 392–480 (EPYHNYRERE…DREKDKEKPK (89 aa)) the composition is skewed to basic and acidic residues. Residues 395–460 (HNYRERERER…RERAKRDEKD (66 aa)) adopt a coiled-coil conformation. Residue S483 is modified to Phosphoserine. A Glycyl lysine isopeptide (Lys-Gly) (interchain with G-Cter in SUMO2) cross-link involves residue K506. Basic and acidic residues predominate over residues 506–516 (KRADEWKDPWR). Residues S528, S530, and S532 each carry the phosphoserine modification. Over residues 541–602 (SASSASASNS…SRSRSFSSSP (62 aa)) the composition is skewed to low complexity. A compositionally biased stretch (pro residues) spans 603 to 612 (SPSPTPSPHR). Glycyl lysine isopeptide (Lys-Gly) (interchain with G-Cter in SUMO2) cross-links involve residues K618 and K657. Basic and acidic residues predominate over residues 657-666 (KPGDLREARR). 2 stretches are compositionally biased toward low complexity: residues 688–721 (GSSY…SVHS) and 732–746 (ASPV…PTPA). Basic and acidic residues predominate over residues 756–770 (KKEDGVREEKRRRDP). Positions 774 to 804 (PPKSSKAPAGGKASQQAAAPQPAVPGQPQQG) are enriched in low complexity. K810 carries the post-translational modification N6-acetyllysine. Residue K813 forms a Glycyl lysine isopeptide (Lys-Gly) (interchain with G-Cter in SUMO2) linkage. Over residues 820-837 (AADKGSRKRYEPSDKDRQ) the composition is skewed to basic and acidic residues. Phosphoserine is present on residues S838, S847, S863, S888, and S891. The span at 888–898 (SPQSKGSSKVT) shows a compositional bias: polar residues. Residues 902–919 (GKATDTATAGTKSGKAST) show a composition bias toward low complexity. K903 participates in a covalent cross-link: Glycyl lysine isopeptide (Lys-Gly) (interchain with G-Cter in SUMO2). Residues 916 to 945 (KASTLSRREELLKQLKAVEDAIARKRAKIP) adopt a coiled-coil conformation.

Interacts with ZFC3H1 in a RNase-insensitive manner.

The protein resides in the nucleus. The polypeptide is Zinc finger CCCH domain-containing protein 18 (Zc3h18) (Mus musculus (Mouse)).